A 319-amino-acid polypeptide reads, in one-letter code: Vomeronasal type-1 receptor 51 (319 aa).

The Extracellular segment spans residues 1 to 31 (MNEILFFSPQPLFSHMMNENSRVHTHSNLRH). Residues 32–52 (IFFSEIGIGISGNSFLLLFHI) traverse the membrane as a helical segment. Residues 53–65 (LKFIHGHRSRLSD) are Cytoplasmic-facing. The helical transmembrane segment at 66–86 (LPIGLLSLIHLLMLLVMAFIA) threads the bilayer. Over 87–109 (TDIFISWRGWDDIICKFLVYLYR) the chain is Extracellular. Cysteine 101 and cysteine 188 are joined by a disulfide. A helical membrane pass occupies residues 110 to 130 (VLRGLSLCTTSMLSVLQAIIL). Residues 131 to 150 (SPRSSCLAKFKRKSLHHISC) are Cytoplasmic-facing. Residues 151 to 171 (AILFLSVLYMLIGSQLLVSII) form a helical membrane-spanning segment. Residues 172 to 203 (ATPNLTTNDFIYVTQSCSILPLSYVMQSMFST) are Extracellular-facing. Asparagine 175 carries an N-linked (GlcNAc...) asparagine glycan. Residues 204–224 (LLVIRDVFLISLMVLSTWYMV) traverse the membrane as a helical segment. Topologically, residues 225–254 (ALLCRHRKKTQHLQGISLSPKTSPKQRATQ) are cytoplasmic. A helical transmembrane segment spans residues 255-275 (TLLMLMSFFVLMTIYDTIVSC). Residues 276–285 (SRTMFLNDPT) lie on the Extracellular side of the membrane. The chain crosses the membrane as a helical span at residues 286–306 (SYNMQIFVVHIYATVSPFVFM). The Cytoplasmic segment spans residues 307-319 (STEKHIVNCLRSV).

This sequence belongs to the G-protein coupled receptor 1 family. Expressed in a subset of sensory neurons located in the apical layer of the vomeronasal organ.

It localises to the cell membrane. Its function is as follows. Putative pheromone receptor implicated in the regulation of social as well as reproductive behavior. In Mus musculus (Mouse), this protein is Vomeronasal type-1 receptor 51 (Vmn1r51).